Consider the following 89-residue polypeptide: Islet amyloid polypeptide (89 aa).

Residues 1–22 (MCLLKLPVVLIVLLVALHHLKA) form the signal peptide. The propeptide occupies 23 to 31 (TPIESNQVE). A disulfide bridge links Cys35 with Cys40. Tyr70 is modified (tyrosine amide). Positions 74 to 89 (STVDILNREPLNYLPF) are excised as a propeptide.

The protein belongs to the calcitonin family. In terms of assembly, can form homodimers. Interacts with IDE and INS. Interaction with INS inhibits homodimerization and fibril formation.

It is found in the secreted. Functionally, amylin/IAPP is a glucoregulatory peptide hormone that plays an important role in the regulation of energy homeostasis. Selectively inhibits insulin-stimulated glucose utilization and glycogen deposition in muscle, while not affecting adipocyte glucose metabolism. IAPP function is mediated by the CALCR-RAMPs (AMYRs) receptor complexes. Amylin can also bind CALCR receptor in the absence of RAMPs, although it is more selective for AMYRs. This is Islet amyloid polypeptide (IAPP) from Felis catus (Cat).